A 310-amino-acid polypeptide reads, in one-letter code: Thioredoxin reductase (310 aa).

Position 34–41 (34–41) interacts with FAD; it reads NGMQPGGQ. Cys135 and Cys138 are oxidised to a cystine. 281–290 lines the FAD pocket; that stretch reads DVQDKIYRQA.

It belongs to the class-II pyridine nucleotide-disulfide oxidoreductase family. As to quaternary structure, homodimer. FAD is required as a cofactor.

The protein resides in the cytoplasm. The enzyme catalyses [thioredoxin]-dithiol + NADP(+) = [thioredoxin]-disulfide + NADPH + H(+). This chain is Thioredoxin reductase (trxB), found in Rickettsia typhi (strain ATCC VR-144 / Wilmington).